A 332-amino-acid polypeptide reads, in one-letter code: MTISLKTAPLLEVSNLSVDFRTDGGWINAVDDVNFTLAPRETLGLVGESGSGKSVTALSLLRLHDQRNSRLGGSVRYKGEDLFTLATSRLQQIRGHEIAMVFQDPIHTLNPVLTIGRQIEEGLRLHHGLQGREARKRAIELLDRVRIPDVARRIDEYPHRMSGGQRQRVMIAIAIAGDPKILIADEPTTALDVTVQAQIMELLRNLRDELSMSVILISHDLGLVSEFADRAMVMYAGQPVETGPINKIFDEPLHPYTEGLLSAIPDLDDDLDRLPTIPGSIPEPSRRPPGCRFAPRCTFAQASCVKPQPIMSLTGGRASRCPPRLPTEECVL.

The ABC transporter domain occupies 11 to 261 (LEVSNLSVDF…PLHPYTEGLL (251 aa)). 47–54 (GESGSGKS) is a binding site for ATP.

The protein belongs to the ABC transporter superfamily. The complex is composed of two ATP-binding proteins (BMEII0205 and BMEII0206), two transmembrane proteins (BMEII0207/BMEII0208 and BMEII0209) and a solute-binding protein (BMEII0210).

It localises to the cell inner membrane. Functionally, probably part of an ABC transporter complex that could be involved in peptide import. Probably responsible for energy coupling to the transport system. This chain is Putative peptide import ATP-binding protein BMEII0206, found in Brucella melitensis biotype 1 (strain ATCC 23456 / CCUG 17765 / NCTC 10094 / 16M).